A 461-amino-acid chain; its full sequence is Ribosomal protein uS12 methylthiotransferase RimO (461 aa).

The MTTase N-terminal domain occupies 9–124; sequence PRIGMVSLGC…VMDAVHLNLP (116 aa). [4Fe-4S] cluster contacts are provided by cysteine 18, cysteine 54, cysteine 83, cysteine 159, cysteine 163, and cysteine 166. The region spanning 145-387 is the Radical SAM core domain; the sequence is LTPRHYAYLK…AVAEAVSSQK (243 aa). Residues 389–461 enclose the TRAM domain; it reads QQRVGATMQV…QGHDLIAVPV (73 aa).

This sequence belongs to the methylthiotransferase family. RimO subfamily. [4Fe-4S] cluster serves as cofactor.

Its subcellular location is the cytoplasm. The catalysed reaction is L-aspartate(89)-[ribosomal protein uS12]-hydrogen + (sulfur carrier)-SH + AH2 + 2 S-adenosyl-L-methionine = 3-methylsulfanyl-L-aspartate(89)-[ribosomal protein uS12]-hydrogen + (sulfur carrier)-H + 5'-deoxyadenosine + L-methionine + A + S-adenosyl-L-homocysteine + 2 H(+). Functionally, catalyzes the methylthiolation of an aspartic acid residue of ribosomal protein uS12. The protein is Ribosomal protein uS12 methylthiotransferase RimO of Polaromonas naphthalenivorans (strain CJ2).